A 158-amino-acid polypeptide reads, in one-letter code: Protein BTG2 (158 aa).

Serine 147 carries the post-translational modification Phosphoserine; by MAPK1 and MAPK3. Serine 149 is modified (phosphoserine; by MAPK14).

It belongs to the BTG family. In terms of assembly, interacts with PRKCABP. Interacts with CNOT7 and CNOT8; indicative for an association with the CCR4-NOT complex. Interacts with PIN1, inducing mitochondrial depolarization. Phosphorylated at Ser-147 by MAPK1/ERK2 and MAPK3/ERK1, and at Ser-149 by MAPK14, leading to PIN1-binding and mitochondrial depolarization.

Functionally, anti-proliferative protein; the function is mediated by association with deadenylase subunits of the CCR4-NOT complex. Activates mRNA deadenylation in a CNOT6 and CNOT7-dependent manner. In vitro can inhibit deadenylase activity of CNOT7 and CNOT8. Involved in cell cycle regulation. Could be involved in the growth arrest and differentiation of the neuronal precursors. Modulates transcription regulation mediated by ESR1. Involved in mitochondrial depolarization and neurite outgrowth. In Homo sapiens (Human), this protein is Protein BTG2 (BTG2).